A 357-amino-acid chain; its full sequence is Protein RecA (357 aa).

Residue 74–81 participates in ATP binding; it reads GPESSGKT.

This sequence belongs to the RecA family.

The protein localises to the cytoplasm. Functionally, can catalyze the hydrolysis of ATP in the presence of single-stranded DNA, the ATP-dependent uptake of single-stranded DNA by duplex DNA, and the ATP-dependent hybridization of homologous single-stranded DNAs. It interacts with LexA causing its activation and leading to its autocatalytic cleavage. This chain is Protein RecA, found in Bordetella petrii (strain ATCC BAA-461 / DSM 12804 / CCUG 43448).